The primary structure comprises 92 residues: Small ribosomal subunit protein uS19 (92 aa).

It belongs to the universal ribosomal protein uS19 family.

Its function is as follows. Protein S19 forms a complex with S13 that binds strongly to the 16S ribosomal RNA. The sequence is that of Small ribosomal subunit protein uS19 (rpsS) from Rickettsia prowazekii (strain Madrid E).